Reading from the N-terminus, the 117-residue chain is UPF0122 protein Teth514_1714 (117 aa).

Belongs to the UPF0122 family.

Its function is as follows. Might take part in the signal recognition particle (SRP) pathway. This is inferred from the conservation of its genetic proximity to ftsY/ffh. May be a regulatory protein. The sequence is that of UPF0122 protein Teth514_1714 from Thermoanaerobacter sp. (strain X514).